The sequence spans 214 residues: 3,4-dihydroxy-2-butanone 4-phosphate synthase (214 aa).

D-ribulose 5-phosphate contacts are provided by residues arginine 40–glutamate 41, aspartate 45, arginine 153–threonine 157, and glutamate 177. Glutamate 41 is a Mg(2+) binding site. Histidine 156 is a Mg(2+) binding site.

Belongs to the DHBP synthase family. Homodimer. Mg(2+) is required as a cofactor. Mn(2+) serves as cofactor.

The catalysed reaction is D-ribulose 5-phosphate = (2S)-2-hydroxy-3-oxobutyl phosphate + formate + H(+). It functions in the pathway cofactor biosynthesis; riboflavin biosynthesis; 2-hydroxy-3-oxobutyl phosphate from D-ribulose 5-phosphate: step 1/1. Catalyzes the conversion of D-ribulose 5-phosphate to formate and 3,4-dihydroxy-2-butanone 4-phosphate. The chain is 3,4-dihydroxy-2-butanone 4-phosphate synthase from Rhodospirillum rubrum (strain ATCC 11170 / ATH 1.1.1 / DSM 467 / LMG 4362 / NCIMB 8255 / S1).